The chain runs to 212 residues: Protein-L-isoaspartate O-methyltransferase (212 aa).

Serine 60 is a catalytic residue.

The protein belongs to the methyltransferase superfamily. L-isoaspartyl/D-aspartyl protein methyltransferase family.

The protein localises to the cytoplasm. The enzyme catalyses [protein]-L-isoaspartate + S-adenosyl-L-methionine = [protein]-L-isoaspartate alpha-methyl ester + S-adenosyl-L-homocysteine. Functionally, catalyzes the methyl esterification of L-isoaspartyl residues in peptides and proteins that result from spontaneous decomposition of normal L-aspartyl and L-asparaginyl residues. It plays a role in the repair and/or degradation of damaged proteins. In Pseudomonas putida (strain ATCC 700007 / DSM 6899 / JCM 31910 / BCRC 17059 / LMG 24140 / F1), this protein is Protein-L-isoaspartate O-methyltransferase.